The chain runs to 1908 residues: Putative ankyrin repeat protein L484 (1908 aa).

5 ANK repeats span residues 20–50 (DIME…KFNI), 60–97 (PNKT…PMDL), 101–130 (DNVW…SIDR), 134–167 (SNNT…DIDK), and 1370–1399 (DGNT…NPFT). Residues 1539 to 1603 (VQLLNPKLRD…QTNISDLEFK (65 aa)) adopt a coiled-coil conformation.

It localises to the virion. This chain is Putative ankyrin repeat protein L484, found in Acanthamoeba polyphaga mimivirus (APMV).